The following is a 269-amino-acid chain: MASEFKKKLFWRAVVAEFLATTLFVFISIGSALGFKYPVGNNQTAVQDNVKVSLAFGLSIATLAQSVGHISGAHLNPAVTLGLLLSCQISIFRALMYIIAQCVGAIVATAILSGITSSLTGNSLGRNDLADGVNSGQGLGIEIIGTLQLVLCVLATTDRRRRDLGGSAPLAIGLSVALGHLLAIDYTGCGINPARSFGSAVITHNFSNHWIFWVGPFIGGALAVLIYDFILAPRSSDLTDRVKVWTSGQVEEYDLDADDINSRVEMKPK.

At 2 to 11 (ASEFKKKLFW) the chain is on the cytoplasmic side. Residues 12-29 (RAVVAEFLATTLFVFISI) form a helical membrane-spanning segment. The Extracellular portion of the chain corresponds to 30–46 (GSALGFKYPVGNNQTAV). N-linked (GlcNAc...) asparagine glycosylation is present at Asn42. Residues 47-65 (QDNVKVSLAFGLSIATLAQ) form a helical membrane-spanning segment. The Cytoplasmic segment spans residues 66–68 (SVG). An intramembrane segment occupies 69–82 (HISGAHLNPAVTLG). The NPA 1 motif lies at 76–78 (NPA). At 83–90 (LLLSCQIS) the chain is on the cytoplasmic side. A helical membrane pass occupies residues 91-109 (IFRALMYIIAQCVGAIVAT). Residues 110–133 (AILSGITSSLTGNSLGRNDLADGV) are Extracellular-facing. The helical transmembrane segment at 134–153 (NSGQGLGIEIIGTLQLVLCV) threads the bilayer. Residues 154-163 (LATTDRRRRD) are Cytoplasmic-facing. Residues 164–181 (LGGSAPLAIGLSVALGHL) traverse the membrane as a helical segment. The Extracellular portion of the chain corresponds to 182–186 (LAIDY). Residues 187-199 (TGCGINPARSFGS) lie within the membrane without spanning it. The NPA 2 motif lies at 192-194 (NPA). At 200 to 206 (AVITHNF) the chain is on the extracellular side. Residue Asn205 is glycosylated (N-linked (GlcNAc...) asparagine). Residues 207-224 (SNHWIFWVGPFIGGALAV) traverse the membrane as a helical segment. Over 225-269 (LIYDFILAPRSSDLTDRVKVWTSGQVEEYDLDADDINSRVEMKPK) the chain is Cytoplasmic. Residue Ser247 is modified to Phosphoserine. Tyr253 bears the Phosphotyrosine mark. Phosphoserine is present on Ser262.

It belongs to the MIP/aquaporin (TC 1.A.8) family. As to quaternary structure, homotetramer; each monomer provides an independent water pore. Component of the ankyrin-1 complex in the erythrocyte, composed of ANK1, RHCE, RHAG, SLC4A1, EPB42, GYPA, GYPB and AQP1. Interacts with EPHB2; involved in endolymph production in the inner ear. Identified in a complex with STOM. Interacts (via the N-terminal) with ANK1 (via ANK 1-5 repeats). Interacts (via the C-terminal) with EPB42. Detected in erythrocytes (at protein level). Expressed in a number of tissues including erythrocytes, renal tubules, retinal pigment epithelium, heart, lung, skeletal muscle, kidney and pancreas. Weakly expressed in brain, placenta and liver.

Its subcellular location is the cell membrane. It carries out the reaction H2O(in) = H2O(out). The enzyme catalyses nitric oxide(out) = nitric oxide(in). It catalyses the reaction CO2(out) = CO2(in). The catalysed reaction is glycerol(in) = glycerol(out). It carries out the reaction H2O2(out) = H2O2(in). The enzyme catalyses K(+)(in) = K(+)(out). It catalyses the reaction Na(+)(in) = Na(+)(out). The water channel activity is inhibited by P-choloromercuribenzene sulphonate and diethylpyrocarbonate(DPPC). The glycerol channel activity is inhibited by P-choloromercuribenzene sulphonate, diethylpyrocarbonate(DPPC), phloretin and Cu(2+). Inhibited by mercury. Functionally, forms a water channel that facilitates the transport of water across cell membranes, playing a crucial role in water homeostasis in various tissues. Could also be permeable to small solutes including hydrogen peroxide, glycerol and gases such as amonnia (NH3), nitric oxide (NO) and carbon dioxide (CO2). Recruited to the ankyrin-1 complex, a multiprotein complex of the erythrocyte membrane, it could be part of a CO2 metabolon, linking facilitated diffusion of CO2 across the membrane, anion exchange of Cl(-)/HCO3(-) and interconversion of dissolved CO2 and carbonic acid in the cytosol. In vitro, it shows non-selective gated cation channel activity and may be permeable to cations like K(+) and Na(+) in vivo. The polypeptide is Aquaporin-1 (Homo sapiens (Human)).